The chain runs to 269 residues: Undecaprenyl-diphosphatase (269 aa).

The next 8 membrane-spanning stretches (helical) occupy residues 4 to 24 (IELWTAVLAGVVQGITEWLPI), 50 to 70 (LWLHAGTLLAVLLRFGVPYWL), 86 to 106 (LFAIVATVCTAVVGLPVYKVL), 113 to 133 (ATGDAVQMAIGGALIVTGLLL), 146 to 166 (VNVVDAVIVGLGQGFSVIPGI), 186 to 206 (AVWLSFYLAGPAMLGATALEL), 220 to 240 (WMVTAIGVSFVVSLICMEVLL), and 246 to 266 (LDFSKVCLLLGGIALLVPLAA).

The protein belongs to the UppP family.

It localises to the cell membrane. The enzyme catalyses di-trans,octa-cis-undecaprenyl diphosphate + H2O = di-trans,octa-cis-undecaprenyl phosphate + phosphate + H(+). Catalyzes the dephosphorylation of undecaprenyl diphosphate (UPP). This Methanopyrus kandleri (strain AV19 / DSM 6324 / JCM 9639 / NBRC 100938) protein is Undecaprenyl-diphosphatase.